Here is a 203-residue protein sequence, read N- to C-terminus: Recombination protein RecR (203 aa).

The segment at 56 to 71 (CSVCGNVSDEERCRIC) adopts a C4-type zinc-finger fold. The 101-residue stretch at 79–179 (SLVCVVEEPK…TVTRIASGLP (101 aa)) folds into the Toprim domain.

The protein belongs to the RecR family.

In terms of biological role, may play a role in DNA repair. It seems to be involved in an RecBC-independent recombinational process of DNA repair. It may act with RecF and RecO. The chain is Recombination protein RecR from Mycolicibacterium smegmatis (strain ATCC 700084 / mc(2)155) (Mycobacterium smegmatis).